Consider the following 330-residue polypeptide: Ferredoxin--NADP reductase 2 (330 aa).

Positions 37, 45, 50, 90, 124, 286, and 327 each coordinate FAD.

This sequence belongs to the ferredoxin--NADP reductase type 2 family. In terms of assembly, homodimer. FAD serves as cofactor.

The catalysed reaction is 2 reduced [2Fe-2S]-[ferredoxin] + NADP(+) + H(+) = 2 oxidized [2Fe-2S]-[ferredoxin] + NADPH. In Shouchella clausii (strain KSM-K16) (Alkalihalobacillus clausii), this protein is Ferredoxin--NADP reductase 2.